A 547-amino-acid chain; its full sequence is Chaperonin GroEL (547 aa).

Residues 29 to 32, Lys50, 86 to 90, Gly414, 477 to 479, and Asp493 contribute to the ATP site; these read TMGP, DGTTT, and NAA.

This sequence belongs to the chaperonin (HSP60) family. As to quaternary structure, forms a cylinder of 14 subunits composed of two heptameric rings stacked back-to-back. Interacts with the co-chaperonin GroES.

Its subcellular location is the cytoplasm. The enzyme catalyses ATP + H2O + a folded polypeptide = ADP + phosphate + an unfolded polypeptide.. Its function is as follows. Together with its co-chaperonin GroES, plays an essential role in assisting protein folding. The GroEL-GroES system forms a nano-cage that allows encapsulation of the non-native substrate proteins and provides a physical environment optimized to promote and accelerate protein folding. The sequence is that of Chaperonin GroEL from Campylobacter rectus (Wolinella recta).